We begin with the raw amino-acid sequence, 662 residues long: Pro-neuregulin-1, membrane-bound isoform (662 aa).

The propeptide occupies 1-13 (MSERKEGRGKGKG). Positions 1–52 (MSERKEGRGKGKGKKKDRGSRGKPGPAEGDPSPALPPRLKEMKSQESAAGSK) are disordered. At 14 to 265 (KKKDRGSRGK…SKAEELYQKR (252 aa)) the chain is on the extracellular side. The Ig-like C2-type domain occupies 37–128 (PRLKEMKSQE…GNDSASANIT (92 aa)). A disulfide bond links C57 and C112. N-linked (GlcNAc...) asparagine glycosylation is found at N120, N126, and N164. Residues 178–222 (HLIKCAEKEKTFCVNGGECFTVKDLSNPSRYLCKCPNEFTGDRCQ) enclose the EGF-like domain. 3 cysteine pairs are disulfide-bonded: C182/C196, C190/C210, and C212/C221. Residues 266-288 (VLTITGICIALLVVGIMCVVAYC) traverse the membrane as a helical segment. Residues 289 to 662 (KTKKQRQKLH…VIANQDPIAV (374 aa)) lie on the Cytoplasmic side of the membrane. Residues 358-373 (SHYTSTAHHSTTVTQT) show a composition bias toward low complexity. Disordered stretches follow at residues 358–383 (SHYT…NGHT), 398–480 (SVEN…PVSS), and 547–610 (YETT…DTPF). A compositionally biased stretch (polar residues) spans 374 to 383 (PSHSWSNGHT). The segment covering 410-420 (GPRGRLHGLGG) has biased composition (gly residues). The span at 425–445 (SFLRHARETPDSYRDSPHSER) shows a compositional bias: basic and acidic residues. Residues 564–574 (TNSRRAKRTKP) are compositionally biased toward basic residues. Low complexity predominate over residues 585–596 (DSNTSSVSSNSE).

The protein belongs to the neuregulin family. As to quaternary structure, the cytoplasmic domain interacts with the LIM domain region of LIMK1. Forms a ternary complex with ERBB3 and ITGAV:ITGB3 or ITGA6:ITGB4. Interacts with NRDC and BACE1. Post-translationally, proteolytic cleavage close to the plasma membrane on the external face leads to the release of the soluble growth factor form. N- and O-glycosylated. Extensive glycosylation precedes the proteolytic cleavage. Widely expressed. Most tissues contain isoform alpha2A and isoform alpha2B. Isoform Alpha2 and isoform beta2 are the predominant forms in mesenchymal and non-neuronal organs. Isoform Beta1 is enriched in brain and spinal cord, but not in muscle and heart. Isoform Alpha2C is highly expressed in spinal cord, moderately in lung, brain, ovary, and stomach, in low amounts in the kidney, skin and heart and not detected in the liver, spleen, and placenta.

The protein resides in the cell membrane. The protein localises to the secreted. In terms of biological role, direct ligand for ERBB3 and ERBB4 tyrosine kinase receptors. Concomitantly recruits ERBB1 and ERBB2 coreceptors, resulting in ligand-stimulated tyrosine phosphorylation and activation of the ERBB receptors. The multiple isoforms perform diverse functions such as inducing growth and differentiation of epithelial, glial, neuronal, and skeletal muscle cells; inducing expression of acetylcholine receptor in synaptic vesicles during the formation of the neuromuscular junction; stimulating lobuloalveolar budding and milk production in the mammary gland and inducing differentiation of mammary tumor cells; stimulating Schwann cell proliferation; implication in the development of the myocardium such as trabeculation of the developing heart. Binds to ERBB4 and ERBB3. Acts as a ligand for integrins and binds (via EGF domain) to integrins ITGAV:ITGB3 or ITGA6:ITGB4. Its binding to integrins and subsequent ternary complex formation with integrins and ERRB3 are essential for NRG1-ERBB signaling. Induces the phosphorylation and activation of MAPK3/ERK1, MAPK1/ERK2 and AKT1, and ligand-dependent ERBB4 endocytosis is essential for the NRG1-mediated activation of these kinases in neurons. This chain is Pro-neuregulin-1, membrane-bound isoform (Nrg1), found in Rattus norvegicus (Rat).